The following is a 493-amino-acid chain: Cobyric acid synthase (493 aa).

A GATase cobBQ-type domain is found at 252–441 (DLKITVIRLP…LHGLLENGPW (190 aa)). C333 (nucleophile) is an active-site residue. H433 is a catalytic residue.

Belongs to the CobB/CobQ family. CobQ subfamily.

The protein operates within cofactor biosynthesis; adenosylcobalamin biosynthesis. In terms of biological role, catalyzes amidations at positions B, D, E, and G on adenosylcobyrinic A,C-diamide. NH(2) groups are provided by glutamine, and one molecule of ATP is hydrogenolyzed for each amidation. This Thermosynechococcus vestitus (strain NIES-2133 / IAM M-273 / BP-1) protein is Cobyric acid synthase.